Consider the following 521-residue polypeptide: Probable xyloglucan galactosyltransferase GT14 (521 aa).

Over 1-30 (MRPKNYSQMEKPISITTGKFRTNNNNNHNN) the chain is Cytoplasmic. Residues 31 to 51 (VWFVVPLFFILCFVLLCFDYS) traverse the membrane as a helical; Signal-anchor for type II membrane protein segment. Residues 52–521 (ALFTDTDETA…SPYEEPQVLA (470 aa)) are Lumenal-facing. Residues 72-92 (TSSEFTKDDNFSRFPDDPSPD) are disordered. Positions 76–87 (FTKDDNFSRFPD) are enriched in basic and acidic residues. Residues Asn-81, Asn-177, Asn-203, Asn-249, Asn-265, and Asn-411 are each glycosylated (N-linked (GlcNAc...) asparagine). Positions 492–521 (RQGKDGSDGFDDRDDYKYTFSPYEEPQVLA) are disordered.

This sequence belongs to the glycosyltransferase 47 family. As to expression, expressed in roots, hypocotyls, cotyledons, leaves, stems, stamens and carpels.

The protein localises to the golgi apparatus membrane. Its function is as follows. Functions in xyloglucan synthesis by adding side chains to the xylosylated glucan backbone. Involved in the galactosylation of hemicellulose xyloglucan. In Arabidopsis thaliana (Mouse-ear cress), this protein is Probable xyloglucan galactosyltransferase GT14.